Consider the following 104-residue polypeptide: Large ribosomal subunit protein uL24 (104 aa).

Belongs to the universal ribosomal protein uL24 family. In terms of assembly, part of the 50S ribosomal subunit.

Its function is as follows. One of two assembly initiator proteins, it binds directly to the 5'-end of the 23S rRNA, where it nucleates assembly of the 50S subunit. Functionally, one of the proteins that surrounds the polypeptide exit tunnel on the outside of the subunit. The polypeptide is Large ribosomal subunit protein uL24 (Chromobacterium violaceum (strain ATCC 12472 / DSM 30191 / JCM 1249 / CCUG 213 / NBRC 12614 / NCIMB 9131 / NCTC 9757 / MK)).